We begin with the raw amino-acid sequence, 417 residues long: NADH-quinone oxidoreductase subunit D (417 aa).

It belongs to the complex I 49 kDa subunit family. In terms of assembly, NDH-1 is composed of 14 different subunits. Subunits NuoB, C, D, E, F, and G constitute the peripheral sector of the complex.

Its subcellular location is the cell inner membrane. It catalyses the reaction a quinone + NADH + 5 H(+)(in) = a quinol + NAD(+) + 4 H(+)(out). Functionally, NDH-1 shuttles electrons from NADH, via FMN and iron-sulfur (Fe-S) centers, to quinones in the respiratory chain. The immediate electron acceptor for the enzyme in this species is believed to be ubiquinone. Couples the redox reaction to proton translocation (for every two electrons transferred, four hydrogen ions are translocated across the cytoplasmic membrane), and thus conserves the redox energy in a proton gradient. In Francisella tularensis subsp. mediasiatica (strain FSC147), this protein is NADH-quinone oxidoreductase subunit D.